The chain runs to 436 residues: GTPase Der (436 aa).

2 EngA-type G domains span residues 4-167 (PVVA…PKEE) and 176-351 (VKFS…DNHS). GTP contacts are provided by residues 10-17 (GRPNVGKS), 57-61 (DTGGI), 119-122 (NKVD), 182-189 (GRPNVGKS), 229-233 (DTAGM), and 294-297 (NKWD). The KH-like domain maps to 352 to 436 (LRVQSSMLND…PIRVIARKRK (85 aa)).

This sequence belongs to the TRAFAC class TrmE-Era-EngA-EngB-Septin-like GTPase superfamily. EngA (Der) GTPase family. In terms of assembly, associates with the 50S ribosomal subunit.

In terms of biological role, GTPase that plays an essential role in the late steps of ribosome biogenesis. This Listeria innocua serovar 6a (strain ATCC BAA-680 / CLIP 11262) protein is GTPase Der.